The primary structure comprises 278 residues: Orotidine 5'-phosphate decarboxylase (278 aa).

Lys96 serves as the catalytic Proton donor.

The protein belongs to the OMP decarboxylase family. Type 2 subfamily.

The enzyme catalyses orotidine 5'-phosphate + H(+) = UMP + CO2. Its pathway is pyrimidine metabolism; UMP biosynthesis via de novo pathway; UMP from orotate: step 2/2. The protein is Orotidine 5'-phosphate decarboxylase of Salinispora arenicola (strain CNS-205).